A 363-amino-acid polypeptide reads, in one-letter code: GTP-binding protein 1 (363 aa).

Positions 63–287 (ARVAFIGFPS…LKERIWEELN (225 aa)) constitute an OBG-type G domain. Residues 69–76 (GFPSVGKS), 115–119 (DLPGI), and 246–249 (KIDA) each bind GTP. One can recognise a TGS domain in the interval 287-362 (NLYRIYTKRK…EEGDVVTIVT (76 aa)).

Belongs to the TRAFAC class OBG-HflX-like GTPase superfamily. OBG GTPase family.

The polypeptide is GTP-binding protein 1 (gtp1) (Schizosaccharomyces pombe (strain 972 / ATCC 24843) (Fission yeast)).